Consider the following 375-residue polypeptide: Succinyl-diaminopimelate desuccinylase (375 aa).

A Zn(2+)-binding site is contributed by His66. Residue Asp68 is part of the active site. Asp99 serves as a coordination point for Zn(2+). Residue Glu133 is the Proton acceptor of the active site. Glu134, Glu162, and His348 together coordinate Zn(2+).

It belongs to the peptidase M20A family. DapE subfamily. In terms of assembly, homodimer. Zn(2+) serves as cofactor. Requires Co(2+) as cofactor.

The catalysed reaction is N-succinyl-(2S,6S)-2,6-diaminopimelate + H2O = (2S,6S)-2,6-diaminopimelate + succinate. Its pathway is amino-acid biosynthesis; L-lysine biosynthesis via DAP pathway; LL-2,6-diaminopimelate from (S)-tetrahydrodipicolinate (succinylase route): step 3/3. Catalyzes the hydrolysis of N-succinyl-L,L-diaminopimelic acid (SDAP), forming succinate and LL-2,6-diaminopimelate (DAP), an intermediate involved in the bacterial biosynthesis of lysine and meso-diaminopimelic acid, an essential component of bacterial cell walls. In Shigella boydii serotype 18 (strain CDC 3083-94 / BS512), this protein is Succinyl-diaminopimelate desuccinylase.